The chain runs to 671 residues: Beta-galactosidase 1 (671 aa).

The first 18 residues, 1–18, serve as a signal peptide directing secretion; sequence MKLIVLIFFLLFINLNYC. Residue Glu-200 is the Proton donor of the active site. N-linked (GlcNAc...) asparagine glycosylation is present at Asn-228. Glu-288 acts as the Nucleophile in catalysis. Residues Asn-321, Asn-391, Asn-400, Asn-499, Asn-509, Asn-564, and Asn-595 are each glycosylated (N-linked (GlcNAc...) asparagine).

This sequence belongs to the glycosyl hydrolase 35 family.

The protein localises to the lysosome. It catalyses the reaction Hydrolysis of terminal non-reducing beta-D-galactose residues in beta-D-galactosides.. In terms of biological role, cleaves beta-linked terminal galactosyl residues from gangliosides, glycoproteins, and glycosaminoglycans. The sequence is that of Beta-galactosidase 1 (glb1) from Dictyostelium discoideum (Social amoeba).